The primary structure comprises 669 residues: DNA ligase (669 aa).

NAD(+) contacts are provided by residues 34–38 (DAEYD), 83–84 (SL), and Glu-114. Residue Lys-116 is the N6-AMP-lysine intermediate of the active site. The NAD(+) site is built by Arg-137, Glu-171, Lys-287, and Lys-311. Cys-405, Cys-408, Cys-423, and Cys-428 together coordinate Zn(2+). The 79-residue stretch at 591–669 (NVESYFAGKT…EERFLQELNK (79 aa)) folds into the BRCT domain.

It belongs to the NAD-dependent DNA ligase family. LigA subfamily. Requires Mg(2+) as cofactor. The cofactor is Mn(2+).

It carries out the reaction NAD(+) + (deoxyribonucleotide)n-3'-hydroxyl + 5'-phospho-(deoxyribonucleotide)m = (deoxyribonucleotide)n+m + AMP + beta-nicotinamide D-nucleotide.. In terms of biological role, DNA ligase that catalyzes the formation of phosphodiester linkages between 5'-phosphoryl and 3'-hydroxyl groups in double-stranded DNA using NAD as a coenzyme and as the energy source for the reaction. It is essential for DNA replication and repair of damaged DNA. In Bacillus cereus (strain AH820), this protein is DNA ligase.